Reading from the N-terminus, the 372-residue chain is 4-hydroxy-3-methylbut-2-en-1-yl diphosphate synthase (flavodoxin) (372 aa).

[4Fe-4S] cluster contacts are provided by C270, C273, C305, and E312.

Belongs to the IspG family. The cofactor is [4Fe-4S] cluster.

It carries out the reaction (2E)-4-hydroxy-3-methylbut-2-enyl diphosphate + oxidized [flavodoxin] + H2O + 2 H(+) = 2-C-methyl-D-erythritol 2,4-cyclic diphosphate + reduced [flavodoxin]. Its pathway is isoprenoid biosynthesis; isopentenyl diphosphate biosynthesis via DXP pathway; isopentenyl diphosphate from 1-deoxy-D-xylulose 5-phosphate: step 5/6. In terms of biological role, converts 2C-methyl-D-erythritol 2,4-cyclodiphosphate (ME-2,4cPP) into 1-hydroxy-2-methyl-2-(E)-butenyl 4-diphosphate. In Shigella dysenteriae serotype 1 (strain Sd197), this protein is 4-hydroxy-3-methylbut-2-en-1-yl diphosphate synthase (flavodoxin).